Here is a 244-residue protein sequence, read N- to C-terminus: Putative B3 domain-containing protein At2g31460 (244 aa).

The segment at residues 49 to 147 is a DNA-binding region (TF-B3); the sequence is SSMHMENSGF…PVHDGVNLSG (99 aa). 2 disordered regions span residues 175–196 and 217–244; these read DGNLPQDSGHDGHNDNLPQDSV and DSQGYLPDEDEDFGFNDDGSIRDSGHYQ. A compositionally biased stretch (basic and acidic residues) spans 235-244; the sequence is GSIRDSGHYQ.

Its subcellular location is the nucleus. The chain is Putative B3 domain-containing protein At2g31460 from Arabidopsis thaliana (Mouse-ear cress).